Reading from the N-terminus, the 252-residue chain is Chitooligosaccharide deacetylase (252 aa).

Positions 61 and 125 each coordinate Mg(2+).

It belongs to the YdjC deacetylase family. ChbG subfamily. In terms of assembly, homodimer. Mg(2+) serves as cofactor.

The protein localises to the cytoplasm. It carries out the reaction N,N'-diacetylchitobiose + H2O = N-acetyl-beta-D-glucosaminyl-(1-&gt;4)-D-glucosamine + acetate. The catalysed reaction is diacetylchitobiose-6'-phosphate + H2O = N'-monoacetylchitobiose-6'-phosphate + acetate. It participates in glycan degradation; chitin degradation. In terms of biological role, involved in the degradation of chitin. ChbG is essential for growth on the acetylated chitooligosaccharides chitobiose and chitotriose but is dispensable for growth on cellobiose and chitosan dimer, the deacetylated form of chitobiose. Deacetylation of chitobiose-6-P and chitotriose-6-P is necessary for both the activation of the chb promoter by the regulatory protein ChbR and the hydrolysis of phosphorylated beta-glucosides by the phospho-beta-glucosidase ChbF. Catalyzes the removal of only one acetyl group from chitobiose-6-P to yield monoacetylchitobiose-6-P, the inducer of ChbR and the substrate of ChbF. The protein is Chitooligosaccharide deacetylase of Salmonella enteritidis PT4 (strain P125109).